A 201-amino-acid chain; its full sequence is Large ribosomal subunit protein uL4 (201 aa).

The segment at 44-71 is disordered; the sequence is RAQKTRAEVTGSGKKPWRQKGTGRARSG.

It belongs to the universal ribosomal protein uL4 family. Part of the 50S ribosomal subunit.

Its function is as follows. One of the primary rRNA binding proteins, this protein initially binds near the 5'-end of the 23S rRNA. It is important during the early stages of 50S assembly. It makes multiple contacts with different domains of the 23S rRNA in the assembled 50S subunit and ribosome. Forms part of the polypeptide exit tunnel. In Pectobacterium carotovorum subsp. carotovorum (strain PC1), this protein is Large ribosomal subunit protein uL4.